Reading from the N-terminus, the 420-residue chain is Gamma-glutamyl phosphate reductase (420 aa).

It belongs to the gamma-glutamyl phosphate reductase family.

It is found in the cytoplasm. The enzyme catalyses L-glutamate 5-semialdehyde + phosphate + NADP(+) = L-glutamyl 5-phosphate + NADPH + H(+). It participates in amino-acid biosynthesis; L-proline biosynthesis; L-glutamate 5-semialdehyde from L-glutamate: step 2/2. Functionally, catalyzes the NADPH-dependent reduction of L-glutamate 5-phosphate into L-glutamate 5-semialdehyde and phosphate. The product spontaneously undergoes cyclization to form 1-pyrroline-5-carboxylate. The protein is Gamma-glutamyl phosphate reductase of Streptococcus gordonii (strain Challis / ATCC 35105 / BCRC 15272 / CH1 / DL1 / V288).